The sequence spans 171 residues: Urease accessory protein UreE (171 aa).

The tract at residues Ser143–Glu171 is disordered. A compositionally biased stretch (basic and acidic residues) spans His152–Glu171.

The protein belongs to the UreE family.

Its subcellular location is the cytoplasm. Involved in urease metallocenter assembly. Binds nickel. Probably functions as a nickel donor during metallocenter assembly. The sequence is that of Urease accessory protein UreE from Brucella abortus biovar 1 (strain 9-941).